Reading from the N-terminus, the 500-residue chain is Chromosomal replication initiator protein DnaA (500 aa).

Residues 1–37 (MSDTPFGDADHPRPAPIHPDAVLPPPMSSQSADNDPT) form a disordered region. Residues 1-103 (MSDTPFGDAD…EELLSDHFHK (103 aa)) are domain I, interacts with DnaA modulators. Over residues 14–27 (PAPIHPDAVLPPPM) the composition is skewed to pro residues. The segment at 103 to 161 (KAIHLAITIDPDLELALGAPDHEDEEEEVPPAQFVPKVTVGVTEPSARPTTTIDDDEGN) is domain II. Residues 162-378 (RLNPKYTFDS…GALIRVTAFA (217 aa)) are domain III, AAA+ region. 4 residues coordinate ATP: Gly206, Gly208, Lys209, and Thr210. The domain IV, binds dsDNA stretch occupies residues 379–500 (SLNQQPVDIS…SEITNRIKQY (122 aa)).

Belongs to the DnaA family. Oligomerizes as a right-handed, spiral filament on DNA at oriC.

It localises to the cytoplasm. Its function is as follows. Plays an essential role in the initiation and regulation of chromosomal replication. ATP-DnaA binds to the origin of replication (oriC) to initiate formation of the DNA replication initiation complex once per cell cycle. Binds the DnaA box (a 9 base pair repeat at the origin) and separates the double-stranded (ds)DNA. Forms a right-handed helical filament on oriC DNA; dsDNA binds to the exterior of the filament while single-stranded (ss)DNA is stabiized in the filament's interior. The ATP-DnaA-oriC complex binds and stabilizes one strand of the AT-rich DNA unwinding element (DUE), permitting loading of DNA polymerase. After initiation quickly degrades to an ADP-DnaA complex that is not apt for DNA replication. Binds acidic phospholipids. The chain is Chromosomal replication initiator protein DnaA from Cutibacterium acnes (strain DSM 16379 / KPA171202) (Propionibacterium acnes).